A 228-amino-acid polypeptide reads, in one-letter code: Ribosomal RNA small subunit methyltransferase G (228 aa).

Residues G82, L87, 105–107, 133–134, and R147 each bind S-adenosyl-L-methionine; these read DAT and VE.

This sequence belongs to the methyltransferase superfamily. RNA methyltransferase RsmG family.

It is found in the cytoplasm. Specifically methylates the N7 position of a guanine in 16S rRNA. The protein is Ribosomal RNA small subunit methyltransferase G of Pelodictyon phaeoclathratiforme (strain DSM 5477 / BU-1).